A 208-amino-acid polypeptide reads, in one-letter code: NAD(P)H-quinone oxidoreductase subunit M, chloroplastic (208 aa).

The N-terminal 21 residues, Met1–Gly21, are a transit peptide targeting the chloroplast. The span at Gln37–Ala49 shows a compositional bias: low complexity. The disordered stretch occupies residues Gln37–Glu70.

Belongs to the NDH complex subunit M family. In terms of assembly, part of the chloroplast NDH complex, composed of a mixture of chloroplast and nucleus encoded subunits. Component of the NDH subcomplex A, at least composed of ndhH, ndhI, ndhJ, ndhK, ndhL, ndhM, ndhN and ndhO.

It localises to the plastid. Its subcellular location is the chloroplast thylakoid membrane. The catalysed reaction is a plastoquinone + NADH + (n+1) H(+)(in) = a plastoquinol + NAD(+) + n H(+)(out). The enzyme catalyses a plastoquinone + NADPH + (n+1) H(+)(in) = a plastoquinol + NADP(+) + n H(+)(out). Its function is as follows. NDH shuttles electrons from NAD(P)H:plastoquinone, via FMN and iron-sulfur (Fe-S) centers, to quinones in the photosynthetic chain and possibly in a chloroplast respiratory chain. The immediate electron acceptor for the enzyme in this species is believed to be plastoquinone. Couples the redox reaction to proton translocation, and thus conserves the redox energy in a proton gradient. This is NAD(P)H-quinone oxidoreductase subunit M, chloroplastic from Vitis vinifera (Grape).